Reading from the N-terminus, the 232-residue chain is MAQEIVWYGAGAGAFFVSAVVFVWFAATRGNIRSSFYYLPPIHTSVAGAAYVAMALIAGGQLGDTVSITTLRFADWIVSTPIITYYLARLAGVDTQTRRLAVAANVVMIGVGYGFVSMSGSLRWIAFAVSTVAFIGLLYLYIKTFARKINAATASVRSLFQSLRDLTVVTWSLYPVVYFLGPLGTGIIQAPDLNFLVAVLDTIAKVGFMSILLVRYNSVETFVDSWSVAPAK.

A run of 7 helical transmembrane segments spans residues 5 to 25, 39 to 59, 73 to 93, 100 to 120, 125 to 145, 168 to 188, and 194 to 214; these read IVWYGAGAGAFFVSAVVFVWF, LPPIHTSVAGAAYVAMALIAG, FADWIVSTPIITYYLARLAGV, LAVAANVVMIGVGYGFVSMSG, IAFAVSTVAFIGLLYLYIKTF, VVTWSLYPVVYFLGPLGTGII, and NFLVAVLDTIAKVGFMSILLV. Lysine 205 is subject to N6-(retinylidene)lysine.

The protein belongs to the archaeal/bacterial/fungal opsin family. In terms of assembly, interacts with HtrM. The covalent binding of retinal to the apoprotein, bacterioopsin, generates bacteriorhodopsin.

It is found in the membrane. Sensory rhodopsin. Associates with an unusual transducer lacking a methyl-accepting transducer domain found in all other photosensory transducers. The chromophore is all-trans-retinal in the dark. This Haloarcula marismortui (strain ATCC 43049 / DSM 3752 / JCM 8966 / VKM B-1809) (Halobacterium marismortui) protein is Sensory rhodopsin III (xop2).